Consider the following 135-residue polypeptide: Large ribosomal subunit protein uL16c (135 aa).

Belongs to the universal ribosomal protein uL16 family. Part of the 50S ribosomal subunit.

It localises to the plastid. The protein resides in the chloroplast. The protein is Large ribosomal subunit protein uL16c of Aethionema cordifolium (Lebanon stonecress).